We begin with the raw amino-acid sequence, 199 residues long: Adenylate kinase (199 aa).

Glycine 8–threonine 13 lines the ATP pocket. The NMP stretch occupies residues serine 28–valine 57. Residues threonine 29, arginine 34, aspartate 55–valine 57, glycine 83–arginine 86, and glutamine 90 each bind AMP. The LID stretch occupies residues lysine 124–aspartate 134. Arginine 125 lines the ATP pocket. AMP contacts are provided by arginine 131 and arginine 142. Glycine 170 is a binding site for ATP.

This sequence belongs to the adenylate kinase family. In terms of assembly, monomer.

It is found in the cytoplasm. The catalysed reaction is AMP + ATP = 2 ADP. The protein operates within purine metabolism; AMP biosynthesis via salvage pathway; AMP from ADP: step 1/1. Functionally, catalyzes the reversible transfer of the terminal phosphate group between ATP and AMP. Plays an important role in cellular energy homeostasis and in adenine nucleotide metabolism. In Leifsonia xyli subsp. xyli (strain CTCB07), this protein is Adenylate kinase.